Here is a 218-residue protein sequence, read N- to C-terminus: C-type lectin domain family 2 member H (218 aa).

Residues 1 to 52 (MNAAKVETSSMGMLQRADLTAADCLQEGEMGKKIQGKCFRIISTVSPVKLYC) lie on the Cytoplasmic side of the membrane. Residues 53–73 (CYGVIMVLTVAVIALSVALSV) form a helical; Signal-anchor for type II membrane protein membrane-spanning segment. At 74-218 (RNKIPAMEDR…SRVGSVPRHV (145 aa)) the chain is on the extracellular side. Cys-90 and Cys-101 are joined by a disulfide. The C-type lectin domain occupies 97-201 (FGSKCFYFSE…SYTHRKWICS (105 aa)). N-linked (GlcNAc...) asparagine glycosylation occurs at Asn-110. The cysteines at positions 118 and 200 are disulfide-linked.

As to expression, detected in ileum, liver, kidney and in IL2-activated natural killer cells.

It localises to the cell membrane. Lectin-type cell surface receptor. In Mus musculus (Mouse), this protein is C-type lectin domain family 2 member H (Clec2h).